The sequence spans 164 residues: Phosphopantetheine adenylyltransferase (164 aa).

Residue S10 coordinates substrate. ATP contacts are provided by residues 10-11 and H18; that span reads SF. Substrate is bound by residues K42, L74, and R88. ATP contacts are provided by residues 89 to 91, E99, and 124 to 130; these read GLR and YSFLSSS.

This sequence belongs to the bacterial CoaD family. As to quaternary structure, homohexamer. The cofactor is Mg(2+).

It is found in the cytoplasm. It carries out the reaction (R)-4'-phosphopantetheine + ATP + H(+) = 3'-dephospho-CoA + diphosphate. The protein operates within cofactor biosynthesis; coenzyme A biosynthesis; CoA from (R)-pantothenate: step 4/5. Its function is as follows. Reversibly transfers an adenylyl group from ATP to 4'-phosphopantetheine, yielding dephospho-CoA (dPCoA) and pyrophosphate. This Exiguobacterium sibiricum (strain DSM 17290 / CCUG 55495 / CIP 109462 / JCM 13490 / 255-15) protein is Phosphopantetheine adenylyltransferase.